Here is a 118-residue protein sequence, read N- to C-terminus: Ribosome-binding factor A (118 aa).

It belongs to the RbfA family. Monomer. Binds 30S ribosomal subunits, but not 50S ribosomal subunits or 70S ribosomes.

It localises to the cytoplasm. Functionally, one of several proteins that assist in the late maturation steps of the functional core of the 30S ribosomal subunit. Associates with free 30S ribosomal subunits (but not with 30S subunits that are part of 70S ribosomes or polysomes). Required for efficient processing of 16S rRNA. May interact with the 5'-terminal helix region of 16S rRNA. In Streptococcus pyogenes serotype M1, this protein is Ribosome-binding factor A.